We begin with the raw amino-acid sequence, 866 residues long: Fibrinogen alpha chain (866 aa).

The first 19 residues, 1–19 (MFSMRIVCLVLSVVGTAWT), serve as a signal peptide directing secretion. A Phosphoserine modification is found at Ser22. Residues 36-38 (GPR) form an alpha-chain polymerization, binding distal domain of another fibrin gamma chain region. Ser45 carries the post-translational modification Phosphoserine; by FAM20C. Ser50 bears the Phosphoserine mark. Ser56 bears the Phosphoserine; by FAM20C mark. Positions 68–631 (CRMKGLIDEV…GHAKSRPVRD (564 aa)) form a coiled coil. The segment at 262–460 (ERPGGNEITR…SGSTTTTRRS (199 aa)) is disordered. Over residues 270–299 (TRGGSTSYGTGSETESPRNPSSAGSWNSGS) the composition is skewed to low complexity. Phosphoserine is present on residues Ser281, Ser291, and Ser294. Thr320 carries O-linked (GalNAc...) threonine glycosylation. Residue Lys322 forms an Isoglutamyl lysine isopeptide (Lys-Gln) (interchain with Q-41 in alpha-2-antiplasmin) linkage. Gln347 is covalently cross-linked (Isoglutamyl lysine isopeptide (Gln-Lys) (interchain with K-?)). Residue Ser351 is glycosylated (O-linked (GalNAc...) serine). Residues 354-391 (PGSTGTWNPGSSERGSAGHWTSESSVSGSTGQWHSESG) are compositionally biased toward polar residues. Residue Ser364 is modified to Phosphoserine; by FAM20C. Residue Gln385 forms an Isoglutamyl lysine isopeptide (Gln-Lys) (interchain with K-?) linkage. Phosphothreonine is present on Thr412. Basic and acidic residues predominate over residues 424–449 (TRREYHTEKLVTSKGDKELRTGKEKV). Over residues 450–460 (TSGSTTTTRRS) the composition is skewed to low complexity. Ser451 is modified (phosphoserine). Ser453 is a glycosylation site (N-linked (GlcNAc...) asparagine; in variant Caracas-2). Cys461 and Cys491 are joined by a disulfide. Residue Ser501 is modified to Phosphoserine. The residue at position 505 (Thr505) is a Phosphothreonine. Position 524 is a phosphoserine; by FAM20C (Ser524). Residues Lys527 and Lys558 each participate in an isoglutamyl lysine isopeptide (Lys-Gln) (interchain with Q-?) cross-link. The segment at 543-638 (ETESRGSESG…VRDCDDVLQT (96 aa)) is disordered. The residue at position 560 (Ser560) is a Phosphoserine; by FAM20C. Pro565 carries the post-translational modification 4-hydroxyproline; by P4HA1. Residues Lys575, Lys581, and Lys599 each participate in an isoglutamyl lysine isopeptide (Lys-Gln) (interchain with Q-?) cross-link. Over residues 575-589 (KSSSYSKQFTSSTSY) the composition is skewed to low complexity. Basic and acidic residues predominate over residues 594 to 617 (STFESKSYKMADEAGSEADHEGTH). The residue at position 609 (Ser609) is a Phosphoserine; by FAM20C. Over residues 618 to 627 (STKRGHAKSR) the composition is skewed to basic residues. The region spanning 623–864 (HAKSRPVRDC…AVRMKIRPLV (242 aa)) is the Fibrinogen C-terminal domain. A glycan (N-linked (GlcNAc...) asparagine) is linked at Asn686. Residues Asp791, Asp793, Trp795, and Glu797 each contribute to the Ca(2+) site. Cys799 and Cys812 are oxidised to a cystine.

As to quaternary structure, heterohexamer; disulfide linked. Contains 2 sets of 3 non-identical chains (alpha, beta and gamma). The 2 heterotrimers are in head to head conformation with the N-termini in a small central domain. In terms of assembly, (Microbial infection) Interacts with Staphylococcus aureus protein Fib; this interaction inhibits fibrinogen-dependent platelet aggregation and protects the bacteria form phagocytosis. Post-translationally, the alpha chain is normally not N-glycosylated, even though glycosylation at Asn-686 was observed when a fragment of the protein was expressed in insect cells. It is well known that heterologous expression of isolated domains can lead to adventitious protein modifications. Besides, glycosylation at Asn-686 is supported by large-scale glycoproteomics studies, but the evidence is still quite tenuous. Most likely, Asn-686 is not glycosylated in the healthy human body, or only with low efficiency. O-glycosylated. In terms of processing, forms F13A-mediated cross-links between a glutamine and the epsilon-amino group of a lysine residue, forming fibronectin-fibrinogen heteropolymers. Post-translationally, about one-third of the alpha chains in the molecules in blood were found to be phosphorylated. Conversion of fibrinogen to fibrin is triggered by thrombin, which cleaves fibrinopeptides A and B from alpha and beta chains, and thus exposes the N-terminal polymerization sites responsible for the formation of the soft clot. The soft clot is converted into the hard clot by factor XIIIA which catalyzes the epsilon-(gamma-glutamyl)lysine cross-linking between gamma chains (stronger) and between alpha chains (weaker) of different monomers. In terms of processing, phosphorylated by FAM20C in the extracellular medium. As to expression, detected in blood plasma (at protein level).

The protein localises to the secreted. Functionally, cleaved by the protease thrombin to yield monomers which, together with fibrinogen beta (FGB) and fibrinogen gamma (FGG), polymerize to form an insoluble fibrin matrix. Fibrin has a major function in hemostasis as one of the primary components of blood clots. In addition, functions during the early stages of wound repair to stabilize the lesion and guide cell migration during re-epithelialization. Was originally thought to be essential for platelet aggregation, based on in vitro studies using anticoagulated blood. However, subsequent studies have shown that it is not absolutely required for thrombus formation in vivo. Enhances expression of SELP in activated platelets via an ITGB3-dependent pathway. Maternal fibrinogen is essential for successful pregnancy. Fibrin deposition is also associated with infection, where it protects against IFNG-mediated hemorrhage. May also facilitate the immune response via both innate and T-cell mediated pathways. This Homo sapiens (Human) protein is Fibrinogen alpha chain (FGA).